Here is a 274-residue protein sequence, read N- to C-terminus: Rhamnulose-1-phosphate aldolase (274 aa).

Glu-117 is a catalytic residue. Residues His-141, His-143, and His-212 each coordinate Zn(2+).

This sequence belongs to the aldolase class II family. RhaD subfamily. Homotetramer. The cofactor is Zn(2+).

It is found in the cytoplasm. It carries out the reaction L-rhamnulose 1-phosphate = (S)-lactaldehyde + dihydroxyacetone phosphate. Its pathway is carbohydrate degradation; L-rhamnose degradation; glycerone phosphate from L-rhamnose: step 3/3. Catalyzes the reversible cleavage of L-rhamnulose-1-phosphate to dihydroxyacetone phosphate (DHAP) and L-lactaldehyde. In Escherichia coli O6:H1 (strain CFT073 / ATCC 700928 / UPEC), this protein is Rhamnulose-1-phosphate aldolase.